Here is an 88-residue protein sequence, read N- to C-terminus: Small ribosomal subunit protein uS15c (88 aa).

Belongs to the universal ribosomal protein uS15 family. In terms of assembly, part of the 30S ribosomal subunit.

The protein resides in the plastid. The protein localises to the chloroplast. This chain is Small ribosomal subunit protein uS15c (rps15), found in Draba nemorosa (Woodland whitlowgrass).